Reading from the N-terminus, the 1158-residue chain is Nuclear receptor-interacting protein 1 (1158 aa).

The tract at residues 1-415 (MTHGEELGSD…EESSTPTTID (415 aa)) is interaction with ZNF366. The LXXLL motif 1 signature appears at 21–25 (LEGLL). Positions 33–56 (SGTAVDKKSAGHNEEDQNFNISGS) are disordered. A compositionally biased stretch (basic and acidic residues) spans 37-47 (VDKKSAGHNEE). A repression domain 1 region spans residues 78-333 (MLHLKKARLL…HLNGQARTSS (256 aa)). S104 is modified (phosphoserine). At K111 the chain carries N6-acetyllysine; alternate. Residue K111 forms a Glycyl lysine isopeptide (Lys-Gly) (interchain with G-Cter in SUMO2); alternate linkage. The LXXLL motif 2 motif lies at 133 to 137 (LASLL). K158 carries the post-translational modification N6-acetyllysine. Residue K170 forms a Glycyl lysine isopeptide (Lys-Gly) (interchain with G-Cter in SUMO2) linkage. The LXXLL motif 3 signature appears at 185–189 (LKTLL). Glycyl lysine isopeptide (Lys-Gly) (interchain with G-Cter in SUMO2) cross-links involve residues K195 and K198. Position 207 is a phosphothreonine (T207). S218 carries the post-translational modification Phosphoserine. The LXXLL motif 4 motif lies at 266-270 (LALLL). An N6-acetyllysine mark is found at K286 and K310. At S356 the chain carries Phosphoserine. Residue K372 forms a Glycyl lysine isopeptide (Lys-Gly) (interchain with G-Cter in SUMO2) linkage. At S378 the chain carries Phosphoserine. The LXXLL motif 5 motif lies at 380–384 (LLHLL). Residues 393 to 435 (MNGHSHSERGSIFEESSTPTTIDEYSDNNPSFTDDSSGDESSY) form a disordered region. A compositionally biased stretch (polar residues) spans 406 to 435 (EESSTPTTIDEYSDNNPSFTDDSSGDESSY). The segment at 410 to 700 (TPTTIDEYSD…PTGPEPGLSG (291 aa)) is repression domain 2. The required for targeting to small nuclear foci stretch occupies residues 431–472 (DESSYSNCVPIDLSCKHRTEKSESDQPVSLDNFTQSLLNTWD). Residues 440 to 446 (PIDLSCK) carry the CTBP-binding; principal site motif. K446 and K481 each carry N6-acetyllysine. S487 is subject to Phosphoserine. Residues 500–504 (LLQLL) carry the LXXLL motif 6 motif. K508 is covalently cross-linked (Glycyl lysine isopeptide (Lys-Gly) (interchain with G-Cter in SUMO2)). S518 carries the post-translational modification Phosphoserine. K528 carries the post-translational modification N6-acetyllysine. A disordered region spans residues 540 to 563 (IESPSTNRTTPVSTPPLLTSSKAG). S542 is subject to Phosphoserine. Low complexity predominate over residues 548–560 (TTPVSTPPLLTSS). S564 is modified (phosphoserine). 2 consecutive short sequence motifs (CTBP-binding) follow at residues 565 to 569 (PINLS) and 599 to 603 (SMDLT). Disordered stretches follow at residues 592 to 622 (TNTASNHSMDLTKSKDPPGEKPAQNEGAQNS) and 641 to 663 (SSMSVEEQRPSKQLLTGNTDKPI). Positions 601–610 (DLTKSKDPPG) are enriched in basic and acidic residues. An N6-acetyllysine modification is found at K606. Polar residues predominate over residues 641-659 (SSMSVEEQRPSKQLLTGNT). S671 carries the phosphoserine modification. The LXXLL motif 7 signature appears at 713 to 717 (LQLLL). The tract at residues 716-745 (LLGNPNKGKSEKKEKTPLRDESTQEHSERA) is disordered. A compositionally biased stretch (basic and acidic residues) spans 723–745 (GKSEKKEKTPLRDESTQEHSERA). The segment at 735-885 (DESTQEHSER…NIVDAANNHS (151 aa)) is repression domain 3. The interval 753-1158 (VKIKSEPCDD…SVLTIKKESE (406 aa)) is interaction with ZNF366. Glycyl lysine isopeptide (Lys-Gly) (interchain with G-Cter in SUMO2) cross-links involve residues K756 and K802. S807 carries the post-translational modification Phosphoserine. Residues 819–823 (LSRLL) carry the LXXLL motif 8 motif. Residues K850 and K901 each participate in a glycyl lysine isopeptide (Lys-Gly) (interchain with G-Cter in SUMO2) cross-link. At K931 the chain carries N6-acetyllysine; alternate. Residue K931 forms a Glycyl lysine isopeptide (Lys-Gly) (interchain with G-Cter in SUMO2); alternate linkage. The LXXLL motif 9 motif lies at 936 to 940 (LKQLL). Positions 946-950 (VRDLS) match the CTBP-binding motif. The segment at 950 to 974 (SPHRSNSVADSKKKGHKNNVTNSKP) is disordered. S1001 is subject to Phosphoserine. Positions 1061-1074 (LTKTNPILYYMLQK) match the Ligand-dependent nuclear receptor binding motif. Residues K1105, K1115, and K1154 each participate in a glycyl lysine isopeptide (Lys-Gly) (interchain with G-Cter in SUMO2) cross-link. The interval 1118 to 1158 (FFNLRSPYNSHMGNNASRPHSANGEVYGLLGSVLTIKKESE) is repression domain 4.

As to quaternary structure, interacts with RARA and RXRB homodimers and RARA/RXRB heterodimers in the presence of ligand. Interacts with HDAC1 and HDAC3 via its N-terminal domain. Interacts with NR2C1 (sumoylated form and via the ligand-binding domain); the interaction results in promoting the repressor activity of NR2C1. Interacts with CTBP1, CTBP2, ESR1, HDAC1, HDAC2, HDAC5, HDAC6, NR2C2, NR3C1, NR3C2, YWHAH, JUN and FOS. Found in a complex with both NR3C1 and YWHAH. Interacts with ZNF366. Interacts with RORA. In terms of processing, acetylation regulates its nuclear translocation and corepressive activity. Acetylation abolishes interaction with CTBP1. Phosphorylation enhances interaction with YWHAH.

It localises to the nucleus. Functionally, modulates transcriptional activation by steroid receptors such as NR3C1, NR3C2 and ESR1. Also modulates transcriptional repression by nuclear hormone receptors. Positive regulator of the circadian clock gene expression: stimulates transcription of BMAL1, CLOCK and CRY1 by acting as a coactivator for RORA and RORC. Involved in the regulation of ovarian function. Plays a role in renal development. In Homo sapiens (Human), this protein is Nuclear receptor-interacting protein 1 (NRIP1).